The chain runs to 78 residues: Small ribosomal subunit protein bS18 (78 aa).

This sequence belongs to the bacterial ribosomal protein bS18 family. Part of the 30S ribosomal subunit. Forms a tight heterodimer with protein bS6.

Its function is as follows. Binds as a heterodimer with protein bS6 to the central domain of the 16S rRNA, where it helps stabilize the platform of the 30S subunit. This Lactobacillus delbrueckii subsp. bulgaricus (strain ATCC BAA-365 / Lb-18) protein is Small ribosomal subunit protein bS18.